We begin with the raw amino-acid sequence, 463 residues long: Glutamate--tRNA ligase 1 (463 aa).

The 'HIGH' region motif lies at 10-20 (PSPTGFLHIGS). The 'KMSKS' region motif lies at 239 to 243 (KLSKR). Lys-242 provides a ligand contact to ATP.

Belongs to the class-I aminoacyl-tRNA synthetase family. Glutamate--tRNA ligase type 1 subfamily. In terms of assembly, monomer.

The protein localises to the cytoplasm. It catalyses the reaction tRNA(Glu) + L-glutamate + ATP = L-glutamyl-tRNA(Glu) + AMP + diphosphate. Its function is as follows. Catalyzes the attachment of glutamate to tRNA(Glu) in a two-step reaction: glutamate is first activated by ATP to form Glu-AMP and then transferred to the acceptor end of tRNA(Glu). The sequence is that of Glutamate--tRNA ligase 1 from Rickettsia canadensis (strain McKiel).